A 386-amino-acid chain; its full sequence is Succinate--CoA ligase [ADP-forming] subunit beta (386 aa).

Residues 9–244 (KEILRKYGVP…HDEEDPLETR (236 aa)) form the ATP-grasp domain. ATP contacts are provided by residues K46, 53–55 (GRG), E99, C102, and E107. Residues N199 and D213 each coordinate Mg(2+). Substrate-binding positions include N264 and 321 to 323 (GIM).

Belongs to the succinate/malate CoA ligase beta subunit family. As to quaternary structure, heterotetramer of two alpha and two beta subunits. Requires Mg(2+) as cofactor.

It catalyses the reaction succinate + ATP + CoA = succinyl-CoA + ADP + phosphate. The catalysed reaction is GTP + succinate + CoA = succinyl-CoA + GDP + phosphate. Its pathway is carbohydrate metabolism; tricarboxylic acid cycle; succinate from succinyl-CoA (ligase route): step 1/1. Functionally, succinyl-CoA synthetase functions in the citric acid cycle (TCA), coupling the hydrolysis of succinyl-CoA to the synthesis of either ATP or GTP and thus represents the only step of substrate-level phosphorylation in the TCA. The beta subunit provides nucleotide specificity of the enzyme and binds the substrate succinate, while the binding sites for coenzyme A and phosphate are found in the alpha subunit. The protein is Succinate--CoA ligase [ADP-forming] subunit beta of Rickettsia conorii (strain ATCC VR-613 / Malish 7).